We begin with the raw amino-acid sequence, 34 residues long: Photosystem II reaction center protein T (34 aa).

A helical transmembrane segment spans residues 3–23; that stretch reads SVAYILIFTLTIGTLFFAVAF.

The protein belongs to the PsbT family. PSII is composed of 1 copy each of membrane proteins PsbA, PsbB, PsbC, PsbD, PsbE, PsbF, PsbH, PsbI, PsbJ, PsbK, PsbL, PsbM, PsbT, PsbX, PsbY, PsbZ, Psb30/Ycf12, peripheral proteins PsbO, CyanoQ (PsbQ), PsbU, PsbV and a large number of cofactors. It forms dimeric complexes.

Its subcellular location is the cellular thylakoid membrane. In terms of biological role, found at the monomer-monomer interface of the photosystem II (PS II) dimer, plays a role in assembly and dimerization of PSII. PSII is a light-driven water plastoquinone oxidoreductase, using light energy to abstract electrons from H(2)O, generating a proton gradient subsequently used for ATP formation. The protein is Photosystem II reaction center protein T of Mastigocladus laminosus (Fischerella sp.).